Consider the following 464-residue polypeptide: 3-isopropylmalate dehydratase large subunit (464 aa).

[4Fe-4S] cluster is bound by residues Cys337, Cys397, and Cys400.

This sequence belongs to the aconitase/IPM isomerase family. LeuC type 1 subfamily. Heterodimer of LeuC and LeuD. [4Fe-4S] cluster is required as a cofactor.

The catalysed reaction is (2R,3S)-3-isopropylmalate = (2S)-2-isopropylmalate. Its pathway is amino-acid biosynthesis; L-leucine biosynthesis; L-leucine from 3-methyl-2-oxobutanoate: step 2/4. Functionally, catalyzes the isomerization between 2-isopropylmalate and 3-isopropylmalate, via the formation of 2-isopropylmaleate. The chain is 3-isopropylmalate dehydratase large subunit from Bacillus cereus (strain AH820).